Here is a 142-residue protein sequence, read N- to C-terminus: Transcriptional regulator MraZ (142 aa).

2 SpoVT-AbrB domains span residues 5–47 and 76–119; these read THTP…PAPE and AHDE…DRVA.

It belongs to the MraZ family. In terms of assembly, forms oligomers.

The protein localises to the cytoplasm. The protein resides in the nucleoid. The chain is Transcriptional regulator MraZ from Salinispora arenicola (strain CNS-205).